Here is a 148-residue protein sequence, read N- to C-terminus: Deoxyuridine 5'-triphosphate nucleotidohydrolase (148 aa).

Substrate is bound by residues arginine 67–glycine 69, asparagine 80, leucine 84–aspartate 86, and methionine 94.

This sequence belongs to the dUTPase family. Mg(2+) is required as a cofactor.

It catalyses the reaction dUTP + H2O = dUMP + diphosphate + H(+). The protein operates within pyrimidine metabolism; dUMP biosynthesis; dUMP from dCTP (dUTP route): step 2/2. Its function is as follows. This enzyme is involved in nucleotide metabolism: it produces dUMP, the immediate precursor of thymidine nucleotides and it decreases the intracellular concentration of dUTP so that uracil cannot be incorporated into DNA. The polypeptide is Deoxyuridine 5'-triphosphate nucleotidohydrolase (Burkholderia cenocepacia (strain HI2424)).